The following is a 223-amino-acid chain: ATP-dependent Clp protease proteolytic subunit 2 (223 aa).

Residue Ser-118 is the Nucleophile of the active site. Residue His-143 is part of the active site.

It belongs to the peptidase S14 family. As to quaternary structure, fourteen ClpP subunits assemble into 2 heptameric rings which stack back to back to give a disk-like structure with a central cavity, resembling the structure of eukaryotic proteasomes.

The protein resides in the cytoplasm. The enzyme catalyses Hydrolysis of proteins to small peptides in the presence of ATP and magnesium. alpha-casein is the usual test substrate. In the absence of ATP, only oligopeptides shorter than five residues are hydrolyzed (such as succinyl-Leu-Tyr-|-NHMec, and Leu-Tyr-Leu-|-Tyr-Trp, in which cleavage of the -Tyr-|-Leu- and -Tyr-|-Trp bonds also occurs).. Functionally, cleaves peptides in various proteins in a process that requires ATP hydrolysis. Has a chymotrypsin-like activity. Plays a major role in the degradation of misfolded proteins. The chain is ATP-dependent Clp protease proteolytic subunit 2 from Leifsonia xyli subsp. xyli (strain CTCB07).